Consider the following 328-residue polypeptide: tRNA U34 carboxymethyltransferase (328 aa).

Residues Lys91, Trp105, Lys110, Gly130, Ile181 to Glu182, Met196, Tyr200, and Arg315 contribute to the carboxy-S-adenosyl-L-methionine site.

The protein belongs to the class I-like SAM-binding methyltransferase superfamily. CmoB family. In terms of assembly, homotetramer.

The enzyme catalyses carboxy-S-adenosyl-L-methionine + 5-hydroxyuridine(34) in tRNA = 5-carboxymethoxyuridine(34) in tRNA + S-adenosyl-L-homocysteine + H(+). Its function is as follows. Catalyzes carboxymethyl transfer from carboxy-S-adenosyl-L-methionine (Cx-SAM) to 5-hydroxyuridine (ho5U) to form 5-carboxymethoxyuridine (cmo5U) at position 34 in tRNAs. This is tRNA U34 carboxymethyltransferase from Pectobacterium carotovorum subsp. carotovorum (strain PC1).